We begin with the raw amino-acid sequence, 438 residues long: Tol-Pal system protein TolB (438 aa).

The N-terminal stretch at 1–36 (MTPAFRRADLTGFLRTYGAALILLLAAMLAWQPAQA) is a signal peptide.

It belongs to the TolB family. As to quaternary structure, the Tol-Pal system is composed of five core proteins: the inner membrane proteins TolA, TolQ and TolR, the periplasmic protein TolB and the outer membrane protein Pal. They form a network linking the inner and outer membranes and the peptidoglycan layer.

The protein resides in the periplasm. Its function is as follows. Part of the Tol-Pal system, which plays a role in outer membrane invagination during cell division and is important for maintaining outer membrane integrity. In Bordetella pertussis (strain Tohama I / ATCC BAA-589 / NCTC 13251), this protein is Tol-Pal system protein TolB.